Here is a 215-residue protein sequence, read N- to C-terminus: UPF0502 protein YceH (215 aa).

Lys-80 bears the N6-acetyllysine mark.

This sequence belongs to the UPF0502 family.

The chain is UPF0502 protein YceH from Escherichia coli O157:H7.